The chain runs to 499 residues: Rhodopsin, GQ-coupled (499 aa).

Topologically, residues M1–W50 are extracellular. N-linked (GlcNAc...) asparagine glycosylation is found at N4, N15, and N19. A helical transmembrane segment spans residues H51 to I75. The Cytoplasmic portion of the chain corresponds to F76 to N87. A helical transmembrane segment spans residues L88 to F114. Topologically, residues H115–Y128 are extracellular. C125 and C203 are oxidised to a cystine. The helical transmembrane segment at G129–I148 threads the bilayer. Residues D149–K168 lie on the Cytoplasmic side of the membrane. A helical transmembrane segment spans residues V169 to G192. At A193–T216 the chain is on the extracellular side. The chain crosses the membrane as a helical span at residues Y217–V244. At R245 to K278 the chain is on the cytoplasmic side. A helical membrane pass occupies residues I279 to Q302. At F303 to T310 the chain is on the extracellular side. A helical transmembrane segment spans residues P311 to S335. K322 bears the N6-(retinylidene)lysine mark. Topologically, residues H336–S499 are cytoplasmic. S-palmitoyl cysteine attachment occurs at residues C353 and C354.

Belongs to the G-protein coupled receptor 1 family. Opsin subfamily. In terms of processing, phosphorylated on some or all of the serine and threonine residues present in the C-terminal region. As to expression, retina. Expressed in the depolarizing cell layer of the photoreceptor cells distant from the lens.

It is found in the membrane. Visual pigments such as rhodopsin and porphyropsin are light-absorbing molecules that mediate vision. Rhodopsin consists of an apoprotein, opsin, covalently linked to 11-cis-retinal. This receptor is coupled to the activation of phospholipase C. Porphyropsin consists of opsin covalently linked to 11-cis 3,4-didehydroretinal. In Mizuhopecten yessoensis (Japanese scallop), this protein is Rhodopsin, GQ-coupled (SCOP1).